The primary structure comprises 149 residues: Ribonuclease pancreatic (149 aa).

The N-terminal stretch at 1–25 (MGLEKSLILFPLFFLLLGWVQPSLG) is a signal peptide. Lys32 and Arg35 together coordinate substrate. The Proton acceptor role is filled by His37. Disulfide bonds link Cys51–Cys109, Cys65–Cys120, Cys83–Cys135, and Cys90–Cys97. Substrate-binding positions include 66–70 (KPVNT) and Lys91. Catalysis depends on His144, which acts as the Proton donor.

Belongs to the pancreatic ribonuclease family. In terms of assembly, monomer. Interacts with and forms tight 1:1 complexes with RNH1. Dimerization of two such complexes may occur. Interaction with RNH1 inhibits this protein. Pancreas.

The protein resides in the secreted. It carries out the reaction an [RNA] containing cytidine + H2O = an [RNA]-3'-cytidine-3'-phosphate + a 5'-hydroxy-ribonucleotide-3'-[RNA].. The enzyme catalyses an [RNA] containing uridine + H2O = an [RNA]-3'-uridine-3'-phosphate + a 5'-hydroxy-ribonucleotide-3'-[RNA].. In terms of biological role, endonuclease that catalyzes the cleavage of RNA on the 3' side of pyrimidine nucleotides. Acts on single-stranded and double-stranded RNA. This is Ribonuclease pancreatic (Rnase1) from Mus musculus (Mouse).